The primary structure comprises 680 residues: MCNIPQHQSRAAWLRAELARHNRLYYELDTPEISDAEYDTLYRELVNLETLWPALMDEASPTQRVGGEVLDRLEKQAHTMRMYSLDNAFSRDEWGAFIQRMYNTLPETPSSFWCDPKMDGLALEVIYENGVFTSALTRGNGAEGEVVTAAMRTVRNLPLRLRGNNVPHRLEVRGEVVIAKADFEQLNARQSAVGGKVFANPRNAAAGSVRQLDTSITAGRPLQFLAYGVGQVVLDGGTAPWTTHSDLMARLREWGFDSPPEGRLCTSPDEVWAYYEMLGARRESLAIEIDGVVAKVDDTEAQEALGFTARAPRWALALKFPAMQVRTRLQDIRVQVGRTGVLTPVAILEPVRVGGVEVSRATLHNAYEIEDKGLMLGDMVLVQRAGDVIPEVVRPLVEDRTGGERPFVFPTTCPECGSVVHKPNDEVAHRCINVSCPAVRRQSIIHFVSKAGLDVRGFGEHIVQQLVDAGRVTTAADLFSLTTVDLMGFERMGPTSAANAIASLDAARTGATLARLICALGIRHVGEQTARTLATHFVDLDAMRKADGEKLLHLPDIGPEVAASIRCFFDNQSNIELLEQLRDKGLWPRKPDANGPFVREGSQLQGLKLLFTGSLQRMSRSEAKRMAEAAGAHVVSNVSKSLDMIVAGADAGSKLDQAKSLGLHVIDEDAFANLLKGLDR.

Residues 35 to 39 (DAEYD), 84 to 85 (SL), and D115 contribute to the NAD(+) site. K117 (N6-AMP-lysine intermediate) is an active-site residue. The NAD(+) site is built by R138, E175, K295, and K319. Zn(2+) contacts are provided by C413, C416, C431, and C436. The BRCT domain maps to 599–680 (REGSQLQGLK…FANLLKGLDR (82 aa)).

This sequence belongs to the NAD-dependent DNA ligase family. LigA subfamily. It depends on Mg(2+) as a cofactor. Requires Mn(2+) as cofactor.

The enzyme catalyses NAD(+) + (deoxyribonucleotide)n-3'-hydroxyl + 5'-phospho-(deoxyribonucleotide)m = (deoxyribonucleotide)n+m + AMP + beta-nicotinamide D-nucleotide.. Its function is as follows. DNA ligase that catalyzes the formation of phosphodiester linkages between 5'-phosphoryl and 3'-hydroxyl groups in double-stranded DNA using NAD as a coenzyme and as the energy source for the reaction. It is essential for DNA replication and repair of damaged DNA. The chain is DNA ligase 1 from Nitratidesulfovibrio vulgaris (strain DP4) (Desulfovibrio vulgaris).